The chain runs to 608 residues: Elongation factor 4 (608 aa).

The region spanning 11–193 is the tr-type G domain; sequence SHIRNFSIVA…AIVHKLPAPK (183 aa). GTP is bound by residues 23 to 28 and 140 to 143; these read DHGKST and NKID.

Belongs to the TRAFAC class translation factor GTPase superfamily. Classic translation factor GTPase family. LepA subfamily.

It is found in the cell inner membrane. It catalyses the reaction GTP + H2O = GDP + phosphate + H(+). In terms of biological role, required for accurate and efficient protein synthesis under certain stress conditions. May act as a fidelity factor of the translation reaction, by catalyzing a one-codon backward translocation of tRNAs on improperly translocated ribosomes. Back-translocation proceeds from a post-translocation (POST) complex to a pre-translocation (PRE) complex, thus giving elongation factor G a second chance to translocate the tRNAs correctly. Binds to ribosomes in a GTP-dependent manner. The sequence is that of Elongation factor 4 from Rhizobium meliloti (strain 1021) (Ensifer meliloti).